A 532-amino-acid chain; its full sequence is Pyruvate kinase (532 aa).

R63 serves as a coordination point for substrate. K(+) is bound by residues N65, S67, D99, and T100. N65 to H68 is a binding site for ATP. R106 and K191 together coordinate ATP. E256 contacts Mg(2+). The substrate site is built by G279, D280, and T312. D280 contacts Mg(2+).

It belongs to the pyruvate kinase family. As to quaternary structure, homotetramer. Requires Mg(2+) as cofactor. K(+) serves as cofactor.

The enzyme catalyses pyruvate + ATP = phosphoenolpyruvate + ADP + H(+). Its pathway is carbohydrate degradation; glycolysis; pyruvate from D-glyceraldehyde 3-phosphate: step 5/5. The protein is Pyruvate kinase (pkiA) of Agaricus bisporus (White button mushroom).